Here is a 307-residue protein sequence, read N- to C-terminus: tRNA pseudouridine synthase B (307 aa).

Residue Asp38 is the Nucleophile of the active site.

This sequence belongs to the pseudouridine synthase TruB family. Type 1 subfamily.

It catalyses the reaction uridine(55) in tRNA = pseudouridine(55) in tRNA. In terms of biological role, responsible for synthesis of pseudouridine from uracil-55 in the psi GC loop of transfer RNAs. In Bacillus thuringiensis (strain Al Hakam), this protein is tRNA pseudouridine synthase B.